Reading from the N-terminus, the 81-residue chain is Photosystem I iron-sulfur center (81 aa).

2 consecutive 4Fe-4S ferredoxin-type domains span residues 2–31 and 39–68; these read SHSV…MIPW and IASA…VRVY. [4Fe-4S] cluster contacts are provided by Cys-11, Cys-14, Cys-17, Cys-21, Cys-48, Cys-51, Cys-54, and Cys-58.

In terms of assembly, the eukaryotic PSI reaction center is composed of at least 11 subunits. It depends on [4Fe-4S] cluster as a cofactor.

It is found in the plastid. Its subcellular location is the chloroplast thylakoid membrane. It catalyses the reaction reduced [plastocyanin] + hnu + oxidized [2Fe-2S]-[ferredoxin] = oxidized [plastocyanin] + reduced [2Fe-2S]-[ferredoxin]. In terms of biological role, apoprotein for the two 4Fe-4S centers FA and FB of photosystem I (PSI); essential for photochemical activity. FB is the terminal electron acceptor of PSI, donating electrons to ferredoxin. The C-terminus interacts with PsaA/B/D and helps assemble the protein into the PSI complex. Required for binding of PsaD and PsaE to PSI. PSI is a plastocyanin-ferredoxin oxidoreductase, converting photonic excitation into a charge separation, which transfers an electron from the donor P700 chlorophyll pair to the spectroscopically characterized acceptors A0, A1, FX, FA and FB in turn. The protein is Photosystem I iron-sulfur center of Arabis hirsuta (Hairy rock-cress).